The chain runs to 33 residues: DCCRKPFRKHCWDCTAGTPYYGYSTRNIFGCTC.

The protein resides in the secreted. In terms of biological role, has antifungal activity against N.crassa and F.culmorum. The sequence is that of Mytimycin from Mytilus edulis (Blue mussel).